The sequence spans 565 residues: Nephronectin (565 aa).

The first 19 residues, 1–19, serve as a signal peptide directing secretion; sequence MDFLLALVLVSSLYLQAAA. The EGF-like 1 domain maps to 52–87; sequence SWGQCQPVCQPRCKHGECIGPNKCKCHPGYAGKTCN. Cystine bridges form between C56/C69, C60/C75, C77/C86, C93/C104, C100/C113, and C115/C127. The EGF-like 2; calcium-binding domain occupies 89-128; it reads DLNECGLKPRPCKHRCMNTYGSYKCYCLNGYMLMPDGSCS. The EGF-like 3 domain occupies 132–168; it reads TCSMANCQYGCDVVKGQIRCQCPSPGLQLAPDGRTCV. One can recognise an EGF-like 4; calcium-binding domain in the interval 169 to 213; the sequence is DVDECATGRASCPRFRQCVNTFGSYICKCHKGFNLMYIGGKYQCH. 6 disulfides stabilise this stretch: C173–C186, C180–C195, C197–C212, C218–C231, C225–C240, and C242–C253. The region spanning 214–254 is the EGF-like 5; calcium-binding domain; it reads DIDECSLGQYQCSSFARCYNIHGSYKCKCKEGYQGDGLTCV. The tract at residues 301-373 is disordered; that stretch reads YIPPIITNRP…PPGGITVDNR (73 aa). The span at 304–316 shows a compositional bias: low complexity; it reads PIITNRPTSKPTT. Pro residues predominate over residues 317-349; the sequence is RPTPKPTPIPTPPPPPPLPTELRTPLPPTTPER. An Integrin interaction motif is present at residues 382 to 384; the sequence is RGD. An MAM domain is found at 420–563; that stretch reads HSCNFDHGLC…VSLKKGHCSE (144 aa).

Belongs to the nephronectin family. As to quaternary structure, homodimer and homotrimer.

It localises to the secreted. The protein localises to the extracellular space. Its subcellular location is the extracellular matrix. In terms of biological role, functional ligand of integrin alpha-8/beta-1 in kidney development. Regulates the expression of GDNF with integrin alpha-8/beta-1 which is essential for kidney development. May also play a role in the development and function of various tissues, regulating cell adhesion, spreading and survival through the binding of several integrins. The polypeptide is Nephronectin (NPNT) (Pongo abelii (Sumatran orangutan)).